Consider the following 145-residue polypeptide: Shadow of prion protein (145 aa).

The N-terminal stretch at 1–24 (MNWAAAVCWALLLAATFLCDGSAA) is a signal peptide. An N-linked (GlcNAc...) asparagine glycan is attached at Asn-105. Ser-119 carries the GPI-anchor amidated serine lipid modification. The propeptide at 120–145 (GAGPTGHRHLCPLLGGALGALRLLRP) is removed in mature form.

Belongs to the SPRN family. Post-translationally, N-glycosylated. Mainly expressed in brain.

The protein resides in the cell membrane. Prion-like protein that has PrP(C)-like neuroprotective activity. May act as a modulator for the biological actions of normal and abnormal PrP. This chain is Shadow of prion protein (SPRN), found in Ovis aries (Sheep).